Here is a 20-residue protein sequence, read N- to C-terminus: Short cationic peptide-4c (20 aa).

Glutamic acid 1-amide is present on Glu20.

In terms of tissue distribution, expressed by the venom gland.

It is found in the secreted. This chain is Short cationic peptide-4c, found in Cupiennius salei (American wandering spider).